The following is a 306-amino-acid chain: Pyridoxal 5'-phosphate synthase subunit PdxS (306 aa).

D-ribose 5-phosphate is bound at residue D36. Catalysis depends on K93, which acts as the Schiff-base intermediate with D-ribose 5-phosphate. G165 serves as a coordination point for D-ribose 5-phosphate. Residue R177 coordinates D-glyceraldehyde 3-phosphate. Residues G226 and 247–248 each bind D-ribose 5-phosphate; that span reads GS.

Belongs to the PdxS/SNZ family. As to quaternary structure, in the presence of PdxT, forms a dodecamer of heterodimers.

The enzyme catalyses aldehydo-D-ribose 5-phosphate + D-glyceraldehyde 3-phosphate + L-glutamine = pyridoxal 5'-phosphate + L-glutamate + phosphate + 3 H2O + H(+). Its pathway is cofactor biosynthesis; pyridoxal 5'-phosphate biosynthesis. Its function is as follows. Catalyzes the formation of pyridoxal 5'-phosphate from ribose 5-phosphate (RBP), glyceraldehyde 3-phosphate (G3P) and ammonia. The ammonia is provided by the PdxT subunit. Can also use ribulose 5-phosphate and dihydroxyacetone phosphate as substrates, resulting from enzyme-catalyzed isomerization of RBP and G3P, respectively. The polypeptide is Pyridoxal 5'-phosphate synthase subunit PdxS (Salinispora tropica (strain ATCC BAA-916 / DSM 44818 / JCM 13857 / NBRC 105044 / CNB-440)).